A 90-amino-acid polypeptide reads, in one-letter code: UPF0213 protein Reut_B5558 (90 aa).

Residues 5 to 80 form the GIY-YIG domain; it reads RQWYLYLLEC…KRMSSAQKIA (76 aa).

It belongs to the UPF0213 family.

The polypeptide is UPF0213 protein Reut_B5558 (Cupriavidus pinatubonensis (strain JMP 134 / LMG 1197) (Cupriavidus necator (strain JMP 134))).